The primary structure comprises 367 residues: Phospho-N-acetylmuramoyl-pentapeptide-transferase (367 aa).

A run of 10 helical transmembrane segments spans residues 28 to 48 (GALMTAMLIAFVFGKPMIGWL), 75 to 95 (TMGGFLILLGVMVGTLLWADL), 96 to 116 (TNAYVWIVIFVTAGFGVIGFI), 134 to 154 (FKLVGEFAIALIAVVWATHTA), 175 to 195 (LMINIGPLFFVFGCVVIVGSG), 206 to 226 (GLAIVPVMIAAATFGVIAYVV), 243 to 263 (AGEILIFCGALIGAGIGFLWW), 271 to 291 (FMGDTGSLSLGGALGTIAVAI), 295 to 315 (LVLAIVGGLFVLELVSVMVQV), and 344 to 364 (TIVIRFWIIAVILALIGLATL).

This sequence belongs to the glycosyltransferase 4 family. MraY subfamily. Mg(2+) is required as a cofactor.

It localises to the cell inner membrane. The enzyme catalyses UDP-N-acetyl-alpha-D-muramoyl-L-alanyl-gamma-D-glutamyl-meso-2,6-diaminopimeloyl-D-alanyl-D-alanine + di-trans,octa-cis-undecaprenyl phosphate = di-trans,octa-cis-undecaprenyl diphospho-N-acetyl-alpha-D-muramoyl-L-alanyl-D-glutamyl-meso-2,6-diaminopimeloyl-D-alanyl-D-alanine + UMP. It participates in cell wall biogenesis; peptidoglycan biosynthesis. Functionally, catalyzes the initial step of the lipid cycle reactions in the biosynthesis of the cell wall peptidoglycan: transfers peptidoglycan precursor phospho-MurNAc-pentapeptide from UDP-MurNAc-pentapeptide onto the lipid carrier undecaprenyl phosphate, yielding undecaprenyl-pyrophosphoryl-MurNAc-pentapeptide, known as lipid I. This Maricaulis maris (strain MCS10) (Caulobacter maris) protein is Phospho-N-acetylmuramoyl-pentapeptide-transferase.